A 340-amino-acid polypeptide reads, in one-letter code: Glyceraldehyde-3-phosphate dehydrogenase (340 aa).

NAD(+)-binding positions include 11–12 (SI) and glycine 111. 140–142 (SCN) provides a ligand contact to D-glyceraldehyde 3-phosphate. The active-site Nucleophile is cysteine 141. Residue arginine 169 participates in NAD(+) binding. 195 to 196 (HG) is a binding site for D-glyceraldehyde 3-phosphate. Position 303 (glutamine 303) interacts with NAD(+).

It belongs to the glyceraldehyde-3-phosphate dehydrogenase family. In terms of assembly, homotetramer.

It is found in the cytoplasm. It catalyses the reaction D-glyceraldehyde 3-phosphate + phosphate + NADP(+) = (2R)-3-phospho-glyceroyl phosphate + NADPH + H(+). It carries out the reaction D-glyceraldehyde 3-phosphate + phosphate + NAD(+) = (2R)-3-phospho-glyceroyl phosphate + NADH + H(+). It participates in carbohydrate degradation; glycolysis; pyruvate from D-glyceraldehyde 3-phosphate: step 1/5. The sequence is that of Glyceraldehyde-3-phosphate dehydrogenase from Methanococcus maripaludis (strain DSM 14266 / JCM 13030 / NBRC 101832 / S2 / LL).